We begin with the raw amino-acid sequence, 357 residues long: Ketoreductase CTB6 (357 aa).

Y172 is a binding site for NADP(+).

The protein belongs to the NAD(P)-dependent epimerase/dehydratase family. Dihydroflavonol-4-reductase subfamily.

It functions in the pathway mycotoxin biosynthesis. Ketoreductase; part of the gene cluster that mediates the biosynthesis of cercosporin, a light-activated, non-host-selective toxin. The perylenequinone chromophore of cercosporin absorbs light energy to attain an electronically-activated triplet state and produces active oxygen species such as the hydroxyl radical, superoxide, hydrogen peroxide or singlet oxygen upon reaction with oxygen molecules. These reactive oxygen species cause damage to various cellular components including lipids, proteins and nucleic acids. The first step of cercosporin biosynthesis is performed by the polyketide synthase CTB1 which catalyzes the formation of nor-toralactone. The starter unit acyltransferase (SAT) domain of CTB1 initiates polyketide extension by the selective utilization of acetyl-CoA, which is elongated to the heptaketide in the beta-ketoacyl synthase (KS) domain by successive condensations with six malonyl units introduced by the malonyl acyltransferase (MAT) domain. The product template (PT) domain catalyzes C4-C9 and C2-C11 aldol cyclizations and dehydrations to a trihydroxynaphthalene, which is thought to be delivered to the thioesterase (TE) domain for product release. The bifunctional enzyme CTB3 then methylates nor-toralactone to toralactone before conducting an unusual oxidative aromatic ring opening. The O-methyltransferase CTB2 further methylates the nascent OH-6 of the CBT3 product, blocking further oxidation at this site before the reductase CTB6 reduces the 2-oxopropyl ketone at position C7, giving naphthalene. The FAD-dependent monooxygenase CTB5 in concert with the multicopper oxidase CTB12 are responsible for homodimerization of naphthalene with CTB7 installing the dioxepine moiety, finally producing cercosporin. The fasciclin domain-containing protein CTB11 might act with CTB5 and CTB12 whereas the roles of CTB9 and CTB10 have still to be elucidated. This chain is Ketoreductase CTB6, found in Cercospora beticola (Sugarbeet leaf spot fungus).